The primary structure comprises 216 residues: Ras-related protein YPTC6 (216 aa).

19 to 26 is a binding site for GTP; that stretch reads GDSGVGKS. The Effector region motif lies at 41–49; the sequence is SKSTIGVEF. Residues 67-71 and 125-128 each bind GTP; these read DTAGQ and NKSD. 2 S-geranylgeranyl cysteine lipidation sites follow: Cys214 and Cys215.

The protein belongs to the small GTPase superfamily. Rab family.

It localises to the cell membrane. The sequence is that of Ras-related protein YPTC6 (YPTC6) from Chlamydomonas reinhardtii (Chlamydomonas smithii).